Consider the following 119-residue polypeptide: Large ribosomal subunit protein bL20 (119 aa).

The protein belongs to the bacterial ribosomal protein bL20 family.

Binds directly to 23S ribosomal RNA and is necessary for the in vitro assembly process of the 50S ribosomal subunit. It is not involved in the protein synthesizing functions of that subunit. The chain is Large ribosomal subunit protein bL20 from Levilactobacillus brevis (strain ATCC 367 / BCRC 12310 / CIP 105137 / JCM 1170 / LMG 11437 / NCIMB 947 / NCTC 947) (Lactobacillus brevis).